A 403-amino-acid polypeptide reads, in one-letter code: MTKIEKIVLSYSGGLDTSIILKWLQETYGCEVVTFTADLGQGEELEPARAKAEMSGVKDIRIVDLREEFVSDFVFPMLRANALYEGQYLLGSSIARPLIAKHLVGIAREVGADAVAHGATGKGNDQIRFELAVNALDPSIKVIAPWRQWNIRSRLQLSEYAEKHRIPVPSDKRGEAPFSIDANLLHTSTEGKSLENPAEVAPDHVYQRTVDPVDAPDTPEIITVGFERGDPVSVNGKAMTPAALLTELNGLGGRHGVGRLDLVENRFIGMKSRGIYETPGGTILLAAHRGIESITLDRAAAHLKDEIMPRYAELIYNGFWFAPEREMLQALIDHSQAFVSGEVTLRLYKGSASVISRASPCSLYSADLVTFEESTIAFDHHDAEGFIRLNGLRLRSWAARNGR.

ATP is bound by residues 10–18 (SYSGGLDTS) and alanine 37. 2 residues coordinate L-citrulline: tyrosine 88 and serine 93. Glycine 118 is an ATP binding site. 3 residues coordinate L-aspartate: threonine 120, asparagine 124, and aspartate 125. Asparagine 124 lines the L-citrulline pocket. Arginine 128, serine 179, serine 188, glutamate 264, and tyrosine 276 together coordinate L-citrulline.

This sequence belongs to the argininosuccinate synthase family. Type 1 subfamily. Homotetramer.

Its subcellular location is the cytoplasm. The catalysed reaction is L-citrulline + L-aspartate + ATP = 2-(N(omega)-L-arginino)succinate + AMP + diphosphate + H(+). Its pathway is amino-acid biosynthesis; L-arginine biosynthesis; L-arginine from L-ornithine and carbamoyl phosphate: step 2/3. The chain is Argininosuccinate synthase 1 from Rhizobium johnstonii (strain DSM 114642 / LMG 32736 / 3841) (Rhizobium leguminosarum bv. viciae).